Reading from the N-terminus, the 216-residue chain is Large ribosomal subunit protein uL3 (216 aa).

2 disordered regions span residues Q89 to F108 and N139 to S158. Position 157 is an N5-methylglutamine (Q157).

Belongs to the universal ribosomal protein uL3 family. Part of the 50S ribosomal subunit. Forms a cluster with proteins L14 and L19. In terms of processing, methylated by PrmB.

One of the primary rRNA binding proteins, it binds directly near the 3'-end of the 23S rRNA, where it nucleates assembly of the 50S subunit. This is Large ribosomal subunit protein uL3 from Halorhodospira halophila (strain DSM 244 / SL1) (Ectothiorhodospira halophila (strain DSM 244 / SL1)).